Reading from the N-terminus, the 95-residue chain is Protein TusB (95 aa).

Belongs to the DsrH/TusB family. Heterohexamer, formed by a dimer of trimers. The hexameric TusBCD complex contains 2 copies each of TusB, TusC and TusD. The TusBCD complex interacts with TusE.

The protein localises to the cytoplasm. Functionally, part of a sulfur-relay system required for 2-thiolation of 5-methylaminomethyl-2-thiouridine (mnm(5)s(2)U) at tRNA wobble positions. The sequence is that of Protein TusB from Escherichia coli O81 (strain ED1a).